Reading from the N-terminus, the 1079-residue chain is Electrogenic sodium bicarbonate cotransporter 1 (1079 aa).

Residues 1–62 form a required for interaction with AHCYL1 region; the sequence is MEDEAVLDRG…EKKEKERISE (62 aa). Topologically, residues 1–466 are cytoplasmic; sequence MEDEAVLDRG…FASDFYDALN (466 aa). The residue at position 2 (Glu-2) is a Phosphoserine. Tyr-30 carries the post-translational modification Phosphotyrosine. A compositionally biased stretch (basic residues) spans 39-52; that stretch reads YRRRRRHKRKAGHK. Positions 39–78 are disordered; it reads YRRRRRHKRKAGHKEKKEKERISENYSDKSDVENADESSS. Basic and acidic residues predominate over residues 53-70; that stretch reads EKKEKERISENYSDKSDV. Ser-61, Ser-65, Ser-68, Ser-223, Ser-232, Ser-233, and Ser-245 each carry phosphoserine. The disordered stretch occupies residues 235 to 266; that stretch reads SRMFSNPDNGSPAMTHRNLTSSSLNDISDKPE. Thr-249 and Thr-254 each carry phosphothreonine. Over residues 251–260 the composition is skewed to polar residues; sequence RNLTSSSLND. Phosphoserine occurs at positions 256, 257, and 262. Residues 467–491 traverse the membrane as a helical segment; sequence IQALSAILFIYLATVTNAITFGGLL. Residues 492–501 are Extracellular-facing; the sequence is GDATDNMQGV. The chain crosses the membrane as a helical span at residues 502 to 520; sequence LESFLGTAVSGAIFCLFAG. Gln-521 is a topological domain (cytoplasmic). The chain crosses the membrane as a discontinuously helical span at residues 522–542; it reads PLTILSSTGPVLVFERLLFNF. Residues 543–550 lie on the Extracellular side of the membrane; the sequence is SKDHSFDY. A helical transmembrane segment spans residues 551–571; the sequence is LEFRLWIGLWSAFMCLILVAT. Residues 572–585 lie on the Cytoplasmic side of the membrane; it reads DASFLVQYFTRFTE. The chain crosses the membrane as a helical span at residues 586 to 609; sequence EGFSSLISFIFIYDAFKKMIKLAD. 2 N-linked (GlcNAc) asparagine glycosylation sites follow: Ile-597 and Phe-617. The Extracellular portion of the chain corresponds to 610–692; that stretch reads YYPINSDFRV…GNNCDFVPDI (83 aa). Residues 693-710 traverse the membrane as a helical segment; sequence TLMSFILFLGTYTSSMAM. At 711-725 the chain is on the cytoplasmic side; that stretch reads KKFKTSRYFPTTARK. The helical transmembrane segment at 726 to 745 threads the bilayer; that stretch reads LISDFAIILSILIFCVIDAL. The Extracellular portion of the chain corresponds to 746–779; the sequence is VGVDTPKLIVPSEFKPTSPHRGWFVPPFGGNPWW. The interaction with CA4 stretch occupies residues 748-779; the sequence is VDTPKLIVPSEFKPTSPHRGWFVPPFGGNPWW. A helical membrane pass occupies residues 780-807; sequence VCLAAAIPALLVTILIFMDQQITAVIVN. The Cytoplasmic portion of the chain corresponds to 808–819; that stretch reads RKEHKLKKGAGY. A helical transmembrane segment spans residues 820–836; that stretch reads HLDLFWVAILMVVCSFM. Ala-837 is a topological domain (extracellular). A discontinuously helical transmembrane segment spans residues 838–855; that stretch reads LPWYVAATVISIAHIDSL. At 856–877 the chain is on the cytoplasmic side; sequence KMETETSAPGEQPKFLGVREQR. The helical transmembrane segment at 878-894 threads the bilayer; it reads VTGTLVFILTGLSVFMA. The Extracellular segment spans residues 895-901; that stretch reads PILKFIP. A helical transmembrane segment spans residues 902–918; sequence MPVLYGVFLYMGVASLN. Over 919-960 the chain is Cytoplasmic; that stretch reads GVQFMDRLKLLLMPLKHQPDFIYLRHVPLRRVHLFTSLQVLC. The discontinuously helical intramembrane region spans 961–986; the sequence is LALLWILKSTVAAIIFPVMILALVAV. The Cytoplasmic segment spans residues 987–1079; it reads RKGMDYLFSQ…STFLERHTSC (93 aa). The interval 1002 to 1004 is CA2-binding; it reads LDD. A disordered region spans residues 1012–1079; it reads KKKEDEKKKK…STFLERHTSC (68 aa). Residues Ser-1026 and Ser-1029 each carry the phosphoserine modification. The residue at position 1026 (Ser-1026) is a Phosphoserine; by PKA. Residues 1030-1033 are CA2-binding; sequence DNDD. Residues Ser-1034 and Ser-1044 each carry the phosphoserine modification. The tract at residues 1057–1059 is required for basolateral targeting; sequence FLS. Residues Asp-1060, Leu-1064, Ser-1069, and Ser-1078 each carry the phosphoserine modification. A compositionally biased stretch (basic and acidic residues) spans 1062–1079; sequence KPLDRERSSTFLERHTSC.

The protein belongs to the anion exchanger (TC 2.A.31) family. Homodimer. Interacts with CA2/carbonic anhydrase 2 and CA4/carbonic anhydrase 4 which may regulate transporter activity. Isoform 1 but not isoform 2 interacts with AHCYL1 (via PEST domain when phosphorylated); the interaction increases SLC4A4 isoform 1 activity. Interacts with AHCYL2. Phosphorylation of Ser-1026 by PKA increases the binding of CA2 and changes the Na(+):HCO3(-) stoichiometry of the transporter from 3:1 to 2:1. Phosphorylated in presence of STK39 and dephosphorylated in presence of PP1 phosphatase; phosphorylation seems to inhibit SLC4A4 activity. In terms of processing, N-glycosylation is not necessary for the transporter basic functions. In terms of tissue distribution, specifically expressed in kidney and to a lower extent in liver, lung, spleen, brain, skeletal muscle and heart. In kidney, expressed in proximal tubules at the corticomedullary junction. Isoform 2 is specifically expressed in kidney. Isoform 1 is expressed in kidney and pancreas while isoform 3 is specifically expressed in brain (at protein level). In brain, isoform 1 is expressed in astrocytes while isoform 3 is expressed in neurons (at protein level). In the eye, isoform 1 is expressed in cornea, conjunctiva, lens epithelium, ciliary bodies and retina while isoform 2 is detected only in the conjunctiva.

Its subcellular location is the basolateral cell membrane. It localises to the cell membrane. It catalyses the reaction 2 hydrogencarbonate(out) + Na(+)(out) = 2 hydrogencarbonate(in) + Na(+)(in). The catalysed reaction is 3 hydrogencarbonate(out) + Na(+)(out) = 3 hydrogencarbonate(in) + Na(+)(in). Its activity is regulated as follows. Inhibited by 4,4'-diisothiocyanatostilbene-2,2'-disulfonic acid (DIDS). Its function is as follows. Electrogenic sodium/bicarbonate cotransporter with a Na(+):HCO3(-) stoichiometry varying from 1:2 to 1:3. May regulate bicarbonate influx/efflux at the basolateral membrane of cells and regulate intracellular pH. The chain is Electrogenic sodium bicarbonate cotransporter 1 (Slc4a4) from Rattus norvegicus (Rat).